The chain runs to 432 residues: Bifunctional IPC transferase and DIPP synthase (432 aa).

Positions 3–225 (PERAVILAAG…RARRMLVRTA (223 aa)) are mobA-like NTP transferase. Residues 9–11 (LAA), Lys-22, and Glu-113 contribute to the CTP site. Glu-113 provides a ligand contact to Mg(2+). Residues 226 to 426 (VKGTGDGFVS…LTLYFVVKKV (201 aa)) form a CDP-alcohol phosphatidyltransferases region. 3 helical membrane passes run 264–284 (FLLGIISALTTLVSLPLAGIL), 337–356 (IWYFVALLALLGSVMVSYST), and 385–405 (VFLTMLFLLYQIAASIKALFL).

It in the N-terminal section; belongs to the MobA family. This sequence in the C-terminal section; belongs to the CDP-alcohol phosphatidyltransferase class-I family. The cofactor is Mg(2+).

It localises to the membrane. The enzyme catalyses 1D-myo-inositol 3-phosphate + CTP + H(+) = CDP-1L-myo-inositol + diphosphate. The catalysed reaction is CDP-1L-myo-inositol + 1D-myo-inositol 3-phosphate = bis(1L-myo-inositol) 3,1'-phosphate 1-phosphate + CMP + H(+). Its function is as follows. Involved in biosynthesis of di-myo-inositol phosphate (DIP), a widespread organic solute in microorganisms adapted to hot environments. Catalyzes the condensation of CTP and L-myo-inositol-1-phosphate into CDP-L-myo-inositol, as well as the biosynthesis of di-myo-inositol-1,3'-phosphate-1'-phosphate (DIPP) from CDP-L-myo-inositol and L-myo-inositol-1-phosphate. The chain is Bifunctional IPC transferase and DIPP synthase from Thermococcus kodakarensis (strain ATCC BAA-918 / JCM 12380 / KOD1) (Pyrococcus kodakaraensis (strain KOD1)).